The primary structure comprises 395 residues: G-protein coupled receptor 182 (395 aa).

At 1 to 53 the chain is on the extracellular side; that stretch reads MSVIPSSRPVSTLAPDNDFREIHNWTELLHLFNQTFSDCHMELNENTKQVVLF. Asparagine 24 and asparagine 33 each carry an N-linked (GlcNAc...) asparagine glycan. The chain crosses the membrane as a helical span at residues 54 to 75; it reads VFYLAIFVVGLVENVLVICVNC. Residues 76–86 lie on the Cytoplasmic side of the membrane; the sequence is RRSGRVGMLNL. A helical membrane pass occupies residues 87–109; the sequence is YILNMAVADLGIILSLPVWMLEV. The Extracellular portion of the chain corresponds to 110-123; the sequence is MLEYTWLWGSFSCR. Cysteine 122 and cysteine 198 are disulfide-bonded. Residues 124-145 traverse the membrane as a helical segment; the sequence is FIHYFYLANMYSSIFFLTCLSI. The Cytoplasmic segment spans residues 146–166; it reads DRYVTLTNTSPSWQRHQHRIR. A helical membrane pass occupies residues 167–189; sequence RAVCAGVWVLSAIIPLPEVVHIQ. The Extracellular segment spans residues 190–213; the sequence is LLDGSEPMCLFLAPFETYSAWALA. The helical transmembrane segment at 214–235 threads the bilayer; the sequence is VALSATILGFLLPFPLIAVFNI. Topologically, residues 236 to 254 are cytoplasmic; it reads LSACRLRRQGQTESRRHCL. A helical transmembrane segment spans residues 255 to 276; sequence LMWAYIVVFVICWLPYHVTMLL. At 277–295 the chain is on the extracellular side; it reads LTLHTTHIFLHCNLVNFLY. A helical membrane pass occupies residues 296-316; it reads FFYEIIDCFSMLHCVANPILY. The Cytoplasmic segment spans residues 317 to 395; it reads NFLSPSFRGR…RTPHLHSAIP (79 aa). A Phosphoserine modification is found at serine 329.

Belongs to the G-protein coupled receptor 1 family. In terms of tissue distribution, expressed in a wide variety of peripheral tissues in the adult rat with prominent expression in lung, testis, adrenal and liver.

Its subcellular location is the cell membrane. Orphan receptor. This Rattus norvegicus (Rat) protein is G-protein coupled receptor 182 (Gpr182).